A 63-amino-acid chain; its full sequence is UPF0512 protein X (63 aa).

This sequence belongs to the UPF0512 family.

The chain is UPF0512 protein X from Dictyostelium discoideum (Social amoeba).